A 264-amino-acid chain; its full sequence is Phosphate import ATP-binding protein PstB (264 aa).

The region spanning 11-250 (LKAEALSVYY…DTTEKIFDSP (240 aa)) is the ABC transporter domain. 43-50 (GPSGCGKS) serves as a coordination point for ATP.

It belongs to the ABC transporter superfamily. Phosphate importer (TC 3.A.1.7) family. As to quaternary structure, the complex is composed of two ATP-binding proteins (PstB), two transmembrane proteins (PstC and PstA) and a solute-binding protein (PstS).

The protein resides in the cell inner membrane. The catalysed reaction is phosphate(out) + ATP + H2O = ADP + 2 phosphate(in) + H(+). In terms of biological role, part of the ABC transporter complex PstSACB involved in phosphate import. Responsible for energy coupling to the transport system. In Synechococcus elongatus (strain ATCC 33912 / PCC 7942 / FACHB-805) (Anacystis nidulans R2), this protein is Phosphate import ATP-binding protein PstB.